Here is a 390-residue protein sequence, read N- to C-terminus: GTPase Obg (390 aa).

In terms of domain architecture, Obg spans 1–159; sequence MKFVDEASIL…RDLLLELMLL (159 aa). The tract at residues 127-147 is disordered; that stretch reads NTRFKSSVNRTPRQKTNGTPG. Over residues 129–145 the composition is skewed to polar residues; the sequence is RFKSSVNRTPRQKTNGT. Positions 160 to 333 constitute an OBG-type G domain; that stretch reads ADVGMLGMPN…LCWDVMTFII (174 aa). Residues 166–173, 191–195, 213–216, 283–286, and 314–316 contribute to the GTP site; these read GMPNAGKS, FTTLV, DIPG, NKID, and SAA. S173 and T193 together coordinate Mg(2+).

The protein belongs to the TRAFAC class OBG-HflX-like GTPase superfamily. OBG GTPase family. Monomer. Mg(2+) serves as cofactor.

It localises to the cytoplasm. In terms of biological role, an essential GTPase which binds GTP, GDP and possibly (p)ppGpp with moderate affinity, with high nucleotide exchange rates and a fairly low GTP hydrolysis rate. Plays a role in control of the cell cycle, stress response, ribosome biogenesis and in those bacteria that undergo differentiation, in morphogenesis control. The polypeptide is GTPase Obg (Salmonella gallinarum (strain 287/91 / NCTC 13346)).